The sequence spans 211 residues: MSGTLGKVLGVWTNTVSKQGFSLLRFRSLGENPIFSAGGILWTSRHYKTKPTHGIGRYRHLVKVQEPKKKKAKVELRAINVGTDYEYGVLNIHLTAYDMSLAESYAQYVHRLCNRLSIKVEESYAMPTKTMEVMRLPDQGNKMVLDSVLTTHERVVQISGLSATFAEIFLEVLQSNLPEGVRLSVREHTEEDFKGRFKARPELEELLAKLN.

The transit peptide at 1–27 directs the protein to the mitochondrion; that stretch reads MSGTLGKVLGVWTNTVSKQGFSLLRFR. The residue at position 198 (Lys198) is an N6-succinyllysine.

It belongs to the mitochondrion-specific ribosomal protein mL48 family. In terms of assembly, component of the mitochondrial ribosome large subunit (39S) which comprises a 16S rRNA and about 50 distinct proteins. Interacts with OXA1L.

The protein localises to the mitochondrion. This chain is Large ribosomal subunit protein mL48 (Mrpl48), found in Mus musculus (Mouse).